Reading from the N-terminus, the 166-residue chain is Lipoprotein signal peptidase (166 aa).

The next 4 helical transmembrane spans lie at Ala9–Leu29, Ala45–Leu65, Trp71–Leu91, and Leu99–Leu119. Active-site residues include Asp126 and Asp144. Residues Trp135 to Ile155 form a helical membrane-spanning segment.

Belongs to the peptidase A8 family.

It is found in the cell inner membrane. It carries out the reaction Release of signal peptides from bacterial membrane prolipoproteins. Hydrolyzes -Xaa-Yaa-Zaa-|-(S,diacylglyceryl)Cys-, in which Xaa is hydrophobic (preferably Leu), and Yaa (Ala or Ser) and Zaa (Gly or Ala) have small, neutral side chains.. The protein operates within protein modification; lipoprotein biosynthesis (signal peptide cleavage). Functionally, this protein specifically catalyzes the removal of signal peptides from prolipoproteins. This Burkholderia vietnamiensis (strain G4 / LMG 22486) (Burkholderia cepacia (strain R1808)) protein is Lipoprotein signal peptidase.